Here is a 460-residue protein sequence, read N- to C-terminus: Bifunctional protein GlmU (460 aa).

The interval methionine 1 to proline 233 is pyrophosphorylase. UDP-N-acetyl-alpha-D-glucosamine contacts are provided by residues lysine 21, glutamine 76, and glycine 81–threonine 82. Residue aspartate 105 coordinates Mg(2+). Glycine 140, glutamate 158, and asparagine 231 together coordinate UDP-N-acetyl-alpha-D-glucosamine. A Mg(2+)-binding site is contributed by asparagine 231. The tract at residues leucine 234 to alanine 254 is linker. Residues glycine 255–arginine 460 are N-acetyltransferase. Residues arginine 337 and lysine 355 each contribute to the UDP-N-acetyl-alpha-D-glucosamine site. The Proton acceptor role is filled by histidine 367. UDP-N-acetyl-alpha-D-glucosamine is bound by residues tyrosine 370 and asparagine 381. Acetyl-CoA is bound by residues alanine 384, asparagine 390–tyrosine 391, serine 409, glycine 427, and arginine 444.

The protein in the N-terminal section; belongs to the N-acetylglucosamine-1-phosphate uridyltransferase family. In the C-terminal section; belongs to the transferase hexapeptide repeat family. In terms of assembly, homotrimer. Mg(2+) is required as a cofactor.

It localises to the cytoplasm. It catalyses the reaction alpha-D-glucosamine 1-phosphate + acetyl-CoA = N-acetyl-alpha-D-glucosamine 1-phosphate + CoA + H(+). The enzyme catalyses N-acetyl-alpha-D-glucosamine 1-phosphate + UTP + H(+) = UDP-N-acetyl-alpha-D-glucosamine + diphosphate. The protein operates within nucleotide-sugar biosynthesis; UDP-N-acetyl-alpha-D-glucosamine biosynthesis; N-acetyl-alpha-D-glucosamine 1-phosphate from alpha-D-glucosamine 6-phosphate (route II): step 2/2. It participates in nucleotide-sugar biosynthesis; UDP-N-acetyl-alpha-D-glucosamine biosynthesis; UDP-N-acetyl-alpha-D-glucosamine from N-acetyl-alpha-D-glucosamine 1-phosphate: step 1/1. It functions in the pathway bacterial outer membrane biogenesis; LPS lipid A biosynthesis. Functionally, catalyzes the last two sequential reactions in the de novo biosynthetic pathway for UDP-N-acetylglucosamine (UDP-GlcNAc). The C-terminal domain catalyzes the transfer of acetyl group from acetyl coenzyme A to glucosamine-1-phosphate (GlcN-1-P) to produce N-acetylglucosamine-1-phosphate (GlcNAc-1-P), which is converted into UDP-GlcNAc by the transfer of uridine 5-monophosphate (from uridine 5-triphosphate), a reaction catalyzed by the N-terminal domain. The chain is Bifunctional protein GlmU from Methylibium petroleiphilum (strain ATCC BAA-1232 / LMG 22953 / PM1).